A 195-amino-acid polypeptide reads, in one-letter code: Lipid A acyltransferase PagP (195 aa).

An N-terminal signal peptide occupies residues 1–30 (MRLTLTSRSRLFVLSSLLFISTFDVLSAQA). Catalysis depends on residues H67, D110, and S111.

The protein belongs to the lipid A palmitoyltransferase family. Homodimer.

The protein resides in the cell outer membrane. The catalysed reaction is a lipid A + a 1,2-diacyl-sn-glycero-3-phosphocholine = a hepta-acyl lipid A + a 2-acyl-sn-glycero-3-phosphocholine. It catalyses the reaction a lipid IVA + a 1,2-diacyl-sn-glycero-3-phosphocholine = a lipid IVB + a 2-acyl-sn-glycero-3-phosphocholine. It carries out the reaction a lipid IIA + a 1,2-diacyl-sn-glycero-3-phosphocholine = a lipid IIB + a 2-acyl-sn-glycero-3-phosphocholine. Its function is as follows. Transfers a fatty acid residue from the sn-1 position of a phospholipid to the N-linked hydroxyfatty acid chain on the proximal unit of lipid A or its precursors. The sequence is that of Lipid A acyltransferase PagP from Dickeya chrysanthemi (strain Ech1591) (Dickeya zeae (strain Ech1591)).